Here is a 795-residue protein sequence, read N- to C-terminus: Delta-1-pyrroline-5-carboxylate synthase (795 aa).

Residues 1 to 361 (MLRHMHRSGV…FFSEVKPAGP (361 aa)) are glutamate 5-kinase. Substrate is bound by residues S117, D223, and N246. ATP-binding positions include 266-267 (SD) and 305-311 (LGGMEAK). An N6-succinyllysine mark is found at K311, K347, and K550. The segment at 362–795 (TVEQQGEMAR…NLPVPQRNFS (434 aa)) is gamma-glutamyl phosphate reductase.

The protein in the N-terminal section; belongs to the glutamate 5-kinase family. In the C-terminal section; belongs to the gamma-glutamyl phosphate reductase family. In terms of assembly, can form homodimers/multimers.

The protein localises to the mitochondrion matrix. The catalysed reaction is L-glutamate + ATP = L-glutamyl 5-phosphate + ADP. It carries out the reaction L-glutamate 5-semialdehyde + phosphate + NADP(+) = L-glutamyl 5-phosphate + NADPH + H(+). Its pathway is amino-acid biosynthesis; L-proline biosynthesis; L-glutamate 5-semialdehyde from L-glutamate: step 1/2. It participates in amino-acid biosynthesis; L-proline biosynthesis; L-glutamate 5-semialdehyde from L-glutamate: step 2/2. Isoform Short: Inhibited by L-ornithine with a Ki of approximately 0.25 mm. Isoform Long: Insensitive to ornithine inhibition. Thus, the two amino acid insert in the long isoform abolishes feedback inhibition of P5CS activity by L-ornithine. Its function is as follows. Bifunctional enzyme that converts glutamate to glutamate 5-semialdehyde, an intermediate in the biosynthesis of proline, ornithine and arginine. This Mus musculus (Mouse) protein is Delta-1-pyrroline-5-carboxylate synthase (Aldh18a1).